A 100-amino-acid polypeptide reads, in one-letter code: Large ribosomal subunit protein uL23 (100 aa).

This sequence belongs to the universal ribosomal protein uL23 family. As to quaternary structure, part of the 50S ribosomal subunit. Contacts protein L29, and trigger factor when it is bound to the ribosome.

Its function is as follows. One of the early assembly proteins it binds 23S rRNA. One of the proteins that surrounds the polypeptide exit tunnel on the outside of the ribosome. Forms the main docking site for trigger factor binding to the ribosome. The chain is Large ribosomal subunit protein uL23 from Mycolicibacterium gilvum (strain PYR-GCK) (Mycobacterium gilvum (strain PYR-GCK)).